The chain runs to 226 residues: MLTWLSRTDFDFPPLDKALQEPNGLLAAGGDLNPQRLVAAYRHGCFPWYQDGQPILWWSPDPRTVLFPDELHVSRSLAKCLRQQRFEVTFNRDFRAVIQACAAPRNYADGTWITTPMQLAYQELHLRGIAHSVEVWQERQLVGGLYGLAMGRLFFGESMFSRADNASKVGFVTLVRHLRDAGFVLIDCQMPTRHLHSLGARAISRGEFADYLQRYRDQPPTGDLDF.

This sequence belongs to the L/F-transferase family.

Its subcellular location is the cytoplasm. It catalyses the reaction N-terminal L-lysyl-[protein] + L-leucyl-tRNA(Leu) = N-terminal L-leucyl-L-lysyl-[protein] + tRNA(Leu) + H(+). The enzyme catalyses N-terminal L-arginyl-[protein] + L-leucyl-tRNA(Leu) = N-terminal L-leucyl-L-arginyl-[protein] + tRNA(Leu) + H(+). It carries out the reaction L-phenylalanyl-tRNA(Phe) + an N-terminal L-alpha-aminoacyl-[protein] = an N-terminal L-phenylalanyl-L-alpha-aminoacyl-[protein] + tRNA(Phe). Functionally, functions in the N-end rule pathway of protein degradation where it conjugates Leu, Phe and, less efficiently, Met from aminoacyl-tRNAs to the N-termini of proteins containing an N-terminal arginine or lysine. This chain is Leucyl/phenylalanyl-tRNA--protein transferase, found in Pseudomonas aeruginosa (strain ATCC 15692 / DSM 22644 / CIP 104116 / JCM 14847 / LMG 12228 / 1C / PRS 101 / PAO1).